The following is a 264-amino-acid chain: 3-methyl-2-oxobutanoate hydroxymethyltransferase (264 aa).

Positions 45 and 84 each coordinate Mg(2+). 3-methyl-2-oxobutanoate is bound by residues 45–46 (DS), aspartate 84, and lysine 112. Glutamate 114 lines the Mg(2+) pocket. Residue glutamate 181 is the Proton acceptor of the active site.

Belongs to the PanB family. In terms of assembly, homodecamer; pentamer of dimers. The cofactor is Mg(2+).

The protein localises to the cytoplasm. The catalysed reaction is 3-methyl-2-oxobutanoate + (6R)-5,10-methylene-5,6,7,8-tetrahydrofolate + H2O = 2-dehydropantoate + (6S)-5,6,7,8-tetrahydrofolate. It functions in the pathway cofactor biosynthesis; (R)-pantothenate biosynthesis; (R)-pantoate from 3-methyl-2-oxobutanoate: step 1/2. Catalyzes the reversible reaction in which hydroxymethyl group from 5,10-methylenetetrahydrofolate is transferred onto alpha-ketoisovalerate to form ketopantoate. In Photobacterium profundum (strain SS9), this protein is 3-methyl-2-oxobutanoate hydroxymethyltransferase.